A 359-amino-acid polypeptide reads, in one-letter code: NADH-quinone oxidoreductase subunit H (359 aa).

Helical transmembrane passes span 16 to 36 (IWPATVWPVLWVLIKIVAVLA), 94 to 114 (GLFILGPIMTIMPALAAWAVI), 128 to 148 (GLLFIMAITSLEVYGVIIAGW), 167 to 187 (VSYEIAMGFCLVVVLMVSGSL), 205 to 225 (GLTFLSWNWLPLLPIFVVYFI), 261 to 281 (FFLAEYANMILVSVLCVLLFL), 296 to 316 (IPGWIWLGLKTFVVVTIFLWV), and 331 to 351 (LGWKIFIPVTLVWLVVVGAWM).

This sequence belongs to the complex I subunit 1 family. As to quaternary structure, NDH-1 is composed of 14 different subunits. Subunits NuoA, H, J, K, L, M, N constitute the membrane sector of the complex.

Its subcellular location is the cell inner membrane. It catalyses the reaction a quinone + NADH + 5 H(+)(in) = a quinol + NAD(+) + 4 H(+)(out). In terms of biological role, NDH-1 shuttles electrons from NADH, via FMN and iron-sulfur (Fe-S) centers, to quinones in the respiratory chain. The immediate electron acceptor for the enzyme in this species is believed to be ubiquinone. Couples the redox reaction to proton translocation (for every two electrons transferred, four hydrogen ions are translocated across the cytoplasmic membrane), and thus conserves the redox energy in a proton gradient. This subunit may bind ubiquinone. The protein is NADH-quinone oxidoreductase subunit H of Polaromonas naphthalenivorans (strain CJ2).